Here is a 146-residue protein sequence, read N- to C-terminus: Large ribosomal subunit protein bL19 (146 aa).

The protein belongs to the bacterial ribosomal protein bL19 family.

Functionally, this protein is located at the 30S-50S ribosomal subunit interface and may play a role in the structure and function of the aminoacyl-tRNA binding site. This Bartonella bacilliformis (strain ATCC 35685 / KC583 / Herrer 020/F12,63) protein is Large ribosomal subunit protein bL19.